The primary structure comprises 158 residues: 6,7-dimethyl-8-ribityllumazine synthase (158 aa).

5-amino-6-(D-ribitylamino)uracil-binding positions include F22, 57-59 (AVE), and 81-83 (AVI). 86–87 (GT) is a binding site for (2S)-2-hydroxy-3-oxobutyl phosphate. H89 (proton donor) is an active-site residue. F114 provides a ligand contact to 5-amino-6-(D-ribitylamino)uracil. A (2S)-2-hydroxy-3-oxobutyl phosphate-binding site is contributed by R128.

The protein belongs to the DMRL synthase family. Forms an icosahedral capsid composed of 60 subunits, arranged as a dodecamer of pentamers.

The catalysed reaction is (2S)-2-hydroxy-3-oxobutyl phosphate + 5-amino-6-(D-ribitylamino)uracil = 6,7-dimethyl-8-(1-D-ribityl)lumazine + phosphate + 2 H2O + H(+). It participates in cofactor biosynthesis; riboflavin biosynthesis; riboflavin from 2-hydroxy-3-oxobutyl phosphate and 5-amino-6-(D-ribitylamino)uracil: step 1/2. Functionally, catalyzes the formation of 6,7-dimethyl-8-ribityllumazine by condensation of 5-amino-6-(D-ribitylamino)uracil with 3,4-dihydroxy-2-butanone 4-phosphate. This is the penultimate step in the biosynthesis of riboflavin. This is 6,7-dimethyl-8-ribityllumazine synthase from Shewanella pealeana (strain ATCC 700345 / ANG-SQ1).